An 84-amino-acid polypeptide reads, in one-letter code: Acyl-CoA-binding protein (84 aa).

An ACB domain is found at 1–84; it reads MTTFEEAAQK…LYEQLATKYA (84 aa). An acyl-CoA-binding positions include Lys-12, 27–31, Lys-53, and Tyr-72; that span reads YGLYK.

Belongs to the ACBP family. Interacts with dhkA.

Functionally, binds to acyl-CoA. Processed into the SDF-2 (spore differentiation factor 2) a peptide which triggers sporulation. SDF-2 appears to stimulate prestalk cells to release additional SDF-2 by acting through a signal transduction pathway that also involves dhkA, regA and PKA. Induces encapsulation of prespore cells in a dhkA-dependent manner. GABA induces the release of acbA from prespore cells and induces the exposure of tagC on the surface of prestalk cells where it can convert acbA to SDF-2. Glutamate acts as a competitive inhibitor and is also able to inhibit induction of sporulation by SDF-2. In Dictyostelium discoideum (Social amoeba), this protein is Acyl-CoA-binding protein (acbA).